The sequence spans 179 residues: Ribulose bisphosphate carboxylase small subunit, chloroplastic 5 (179 aa).

The N-terminal 58 residues, 1 to 58 (MASSATMLSSVATAACAAPAQASMVAPFVGLKSASAFPVTQKTATGLSTLPSNGGRVQ), are a transit peptide targeting the chloroplast.

Belongs to the RuBisCO small chain family. As to quaternary structure, heterohexadecamer of 8 large and 8 small subunits.

It localises to the plastid. It is found in the chloroplast. Functionally, ruBisCO catalyzes two reactions: the carboxylation of D-ribulose 1,5-bisphosphate, the primary event in carbon dioxide fixation, as well as the oxidative fragmentation of the pentose substrate. Both reactions occur simultaneously and in competition at the same active site. Although the small subunit is not catalytic it is essential for maximal activity. The sequence is that of Ribulose bisphosphate carboxylase small subunit, chloroplastic 5 from Fritillaria agrestis (Stinkbells).